The chain runs to 1338 residues: Phosphoribosylformylglycinamidine synthase (1338 aa).

Ser215 is subject to Phosphoserine. ATP is bound by residues 322-333 and 402-404; these read GATTGTGGRIRD and AGF. Phosphoserine is present on Ser569. 2 positions are modified to phosphothreonine: Thr619 and Thr623. Ala706 is a binding site for ATP. Mg(2+)-binding residues include Asp707, Glu746, Asn750, and Asp909. Ser911 provides a ligand contact to ATP. The 239-residue stretch at 1064 to 1302 folds into the Glutamine amidotransferase type-1 domain; it reads RVAILREEGS…AVMPHPERAV (239 aa). The Nucleophile role is filled by Cys1158. Catalysis depends on residues His1297 and Glu1299.

In the N-terminal section; belongs to the FGAMS family.

The protein resides in the cytoplasm. The enzyme catalyses N(2)-formyl-N(1)-(5-phospho-beta-D-ribosyl)glycinamide + L-glutamine + ATP + H2O = 2-formamido-N(1)-(5-O-phospho-beta-D-ribosyl)acetamidine + L-glutamate + ADP + phosphate + H(+). Its pathway is purine metabolism; IMP biosynthesis via de novo pathway; 5-amino-1-(5-phospho-D-ribosyl)imidazole from N(2)-formyl-N(1)-(5-phospho-D-ribosyl)glycinamide: step 1/2. Phosphoribosylformylglycinamidine synthase involved in the purines biosynthetic pathway. Catalyzes the ATP-dependent conversion of formylglycinamide ribonucleotide (FGAR) and glutamine to yield formylglycinamidine ribonucleotide (FGAM) and glutamate. The protein is Phosphoribosylformylglycinamidine synthase (PFAS) of Homo sapiens (Human).